Here is a 445-residue protein sequence, read N- to C-terminus: UDP-N-acetylmuramoylalanine--D-glutamate ligase (445 aa).

Position 126 to 132 (126 to 132) interacts with ATP; that stretch reads GTSGKTT.

The protein belongs to the MurCDEF family.

Its subcellular location is the cytoplasm. It catalyses the reaction UDP-N-acetyl-alpha-D-muramoyl-L-alanine + D-glutamate + ATP = UDP-N-acetyl-alpha-D-muramoyl-L-alanyl-D-glutamate + ADP + phosphate + H(+). Its pathway is cell wall biogenesis; peptidoglycan biosynthesis. Its function is as follows. Cell wall formation. Catalyzes the addition of glutamate to the nucleotide precursor UDP-N-acetylmuramoyl-L-alanine (UMA). This Nitratidesulfovibrio vulgaris (strain DSM 19637 / Miyazaki F) (Desulfovibrio vulgaris) protein is UDP-N-acetylmuramoylalanine--D-glutamate ligase.